The following is a 354-amino-acid chain: Inactive ADP-ribosyltransferase arh2 (354 aa).

Belongs to the ADP-ribosylglycohydrolase family. Expressed in heart (at protein level). A short form is detected in both heart and tadpole tail (at protein level).

It is found in the cytoplasm. The protein localises to the myofibril. The protein resides in the sarcomere. In terms of biological role, required for myofibril assembly and outgrowth of the cardiac chambers in the developing heart. Appears to be catalytically inactive, showing no activity against O-acetyl-ADP-ribose. This Xenopus laevis (African clawed frog) protein is Inactive ADP-ribosyltransferase arh2 (adprhl1).